The chain runs to 878 residues: Outer membrane usher protein FimD (878 aa).

The signal sequence occupies residues 1–45 (MSYLNLRLYQRNTQCLHIRKHRLAGFFVRLVVACAFAAQAPLSSA). Cysteine 855 and cysteine 877 form a disulfide bridge.

This sequence belongs to the fimbrial export usher family.

Its subcellular location is the cell outer membrane. Involved in the export and assembly of FimA fimbrial subunits across the outer membrane. The sequence is that of Outer membrane usher protein FimD (fimD) from Escherichia coli (strain K12).